The sequence spans 44 residues: Conotoxin Cl9a (44 aa).

4-carboxyglutamate is present on residues E7, E8, and E24. 3 disulfide bridges follow: C9–C33, C15–C40, and C23–C42.

As to expression, expressed by the venom duct.

It localises to the secreted. This chain is Conotoxin Cl9a, found in Californiconus californicus (California cone).